The primary structure comprises 307 residues: tRNA N(3)-methylcytidine methyltransferase trm140 (307 aa).

Positions 83, 87, 125, 150, 176, 177, and 197 each coordinate S-adenosyl-L-methionine.

The protein belongs to the methyltransferase superfamily. METL family.

It carries out the reaction cytidine(32) in tRNA(Thr) + S-adenosyl-L-methionine = N(3)-methylcytidine(32) in tRNA(Thr) + S-adenosyl-L-homocysteine + H(+). Its function is as follows. S-adenosyl-L-methionine-dependent methyltransferase that mediates N(3)-methylcytidine modification of residue 32 of the tRNA anticodon loop of tRNA(Thr). Does not catalyze N(3)-methylcytidine modification of tRNA(Ser). In Schizosaccharomyces pombe (strain 972 / ATCC 24843) (Fission yeast), this protein is tRNA N(3)-methylcytidine methyltransferase trm140.